The following is a 205-amino-acid chain: SREBP regulating gene protein (205 aa).

At 1-16 the chain is on the cytoplasmic side; that stretch reads MVNLAAMVWRRLLRKR. The helical transmembrane segment at 17–35 threads the bilayer; it reads WVLALVFGLSLVYFLTSTF. Residues 36-205 lie on the Lumenal side of the membrane; that stretch reads KQEERAVRDR…GESPPELFPA (170 aa). Asn67 carries N-linked (GlcNAc...) asparagine glycosylation.

It belongs to the SPRING family. Interacts with SCAP.

The protein resides in the golgi apparatus membrane. In terms of biological role, positively regulates hepatic SREBP signaling pathway by modulating the proper localization of SCAP (SREBP cleavage-activating protein) to the endoplasmic reticulum, thereby controlling the level of functional SCAP. The protein is SREBP regulating gene protein of Bos taurus (Bovine).